The primary structure comprises 453 residues: Putative sodium-coupled neutral amino acid transporter 11 (453 aa).

Positions 1–34 are disordered; the sequence is MSYQQPQLRGPLQRETDPSDRESLVSGHEHGGKS. Basic and acidic residues predominate over residues 12-32; the sequence is LQRETDPSDRESLVSGHEHGG. The next 11 helical transmembrane spans lie at 39–59, 66–86, 106–126, 152–172, 179–199, 222–242, 262–282, 299–319, 337–357, 359–379, and 399–419; these read AVFN…PYSM, LGIL…VLLI, GFPG…IAMI, FISR…PLSL, LGKI…VVVT, AIQA…CFLV, ILVS…TFTG, VTFG…IECF, VFHV…SLLI, CLGI…IFII, and MACV…VMAI.

It belongs to the amino acid/polyamine transporter 2 family. In terms of tissue distribution, widely expressed.

It is found in the membrane. Functionally, putative sodium-dependent amino acid/proton antiporter. The chain is Putative sodium-coupled neutral amino acid transporter 11 (Slc38a11) from Rattus norvegicus (Rat).